Consider the following 156-residue polypeptide: Endoribonuclease YbeY (156 aa).

The Zn(2+) site is built by histidine 122, histidine 126, and histidine 132.

It belongs to the endoribonuclease YbeY family. It depends on Zn(2+) as a cofactor.

It is found in the cytoplasm. Functionally, single strand-specific metallo-endoribonuclease involved in late-stage 70S ribosome quality control and in maturation of the 3' terminus of the 16S rRNA. The protein is Endoribonuclease YbeY of Bacillus mycoides (strain KBAB4) (Bacillus weihenstephanensis).